The sequence spans 320 residues: o-succinylbenzoate synthase (320 aa).

Lys133 serves as the catalytic Proton donor. Positions 161, 190, and 213 each coordinate Mg(2+). Lys235 functions as the Proton acceptor in the catalytic mechanism.

The protein belongs to the mandelate racemase/muconate lactonizing enzyme family. MenC type 1 subfamily. Requires a divalent metal cation as cofactor.

It catalyses the reaction (1R,6R)-6-hydroxy-2-succinyl-cyclohexa-2,4-diene-1-carboxylate = 2-succinylbenzoate + H2O. The protein operates within quinol/quinone metabolism; 1,4-dihydroxy-2-naphthoate biosynthesis; 1,4-dihydroxy-2-naphthoate from chorismate: step 4/7. Its pathway is quinol/quinone metabolism; menaquinone biosynthesis. In terms of biological role, converts 2-succinyl-6-hydroxy-2,4-cyclohexadiene-1-carboxylate (SHCHC) to 2-succinylbenzoate (OSB). This is o-succinylbenzoate synthase from Escherichia coli O6:H1 (strain CFT073 / ATCC 700928 / UPEC).